Here is a 419-residue protein sequence, read N- to C-terminus: Serine hydroxymethyltransferase (419 aa).

Residues leucine 121 and 125-127 (GHL) each bind (6S)-5,6,7,8-tetrahydrofolate. At lysine 229 the chain carries N6-(pyridoxal phosphate)lysine.

It belongs to the SHMT family. As to quaternary structure, homodimer. The cofactor is pyridoxal 5'-phosphate.

It is found in the cytoplasm. It carries out the reaction (6R)-5,10-methylene-5,6,7,8-tetrahydrofolate + glycine + H2O = (6S)-5,6,7,8-tetrahydrofolate + L-serine. The protein operates within one-carbon metabolism; tetrahydrofolate interconversion. It functions in the pathway amino-acid biosynthesis; glycine biosynthesis; glycine from L-serine: step 1/1. In terms of biological role, catalyzes the reversible interconversion of serine and glycine with tetrahydrofolate (THF) serving as the one-carbon carrier. This reaction serves as the major source of one-carbon groups required for the biosynthesis of purines, thymidylate, methionine, and other important biomolecules. Also exhibits THF-independent aldolase activity toward beta-hydroxyamino acids, producing glycine and aldehydes, via a retro-aldol mechanism. This chain is Serine hydroxymethyltransferase, found in Streptomyces griseus subsp. griseus (strain JCM 4626 / CBS 651.72 / NBRC 13350 / KCC S-0626 / ISP 5235).